The primary structure comprises 481 residues: ATP synthase subunit beta, chloroplastic (481 aa).

ATP is bound at residue 161–168 (GGAGVGKT).

It belongs to the ATPase alpha/beta chains family. As to quaternary structure, F-type ATPases have 2 components, CF(1) - the catalytic core - and CF(0) - the membrane proton channel. CF(1) has five subunits: alpha(3), beta(3), gamma(1), delta(1), epsilon(1). CF(0) has four main subunits: a(1), b(1), b'(1) and c(9-12).

It localises to the plastid. The protein localises to the chloroplast thylakoid membrane. It catalyses the reaction ATP + H2O + 4 H(+)(in) = ADP + phosphate + 5 H(+)(out). Produces ATP from ADP in the presence of a proton gradient across the membrane. The catalytic sites are hosted primarily by the beta subunits. The polypeptide is ATP synthase subunit beta, chloroplastic (Mesostigma viride (Green alga)).